The sequence spans 213 residues: Cytochrome b6 (213 aa).

A helical membrane pass occupies residues Ile-30 to Val-50. Cys-33 serves as a coordination point for heme c. His-84 and His-98 together coordinate heme b. 3 consecutive transmembrane segments (helical) span residues Cys-88–Phe-108, Leu-114–Tyr-134, and Leu-184–Ile-204. His-185 and His-200 together coordinate heme b.

Belongs to the cytochrome b family. PetB subfamily. The subunits of the cytochrome bc complex are a Rieske Fe-S protein (PetC), cytochrome b6 (PetB), subunit IV (PetD), and a diheme cytochrome c (PetX). It depends on heme b as a cofactor. Heme c is required as a cofactor.

The protein resides in the cell membrane. Its function is as follows. Component of the cytochrome bc complex which donates electrons to the photosynthetic reaction center. The sequence is that of Cytochrome b6 from Heliobacterium modesticaldum (strain ATCC 51547 / Ice1).